The chain runs to 143 residues: MFMGEYTHTIDDKGRLIIPAKFRSQLGDDFIITRGLDHCLYGYPLIEWQAVQQRLASLPSTNANARKLVRYFYSAACECQFDKQGRVNLPANLMQHAYLERDCVVIGVASHFEIWDAERWASYQDAAASDFDQLAAGFDGLSF.

SpoVT-AbrB domains are found at residues 5-47 (EYTH…PLIE) and 76-119 (ACEC…DAER).

Belongs to the MraZ family. As to quaternary structure, forms oligomers.

The protein resides in the cytoplasm. It localises to the nucleoid. The sequence is that of Transcriptional regulator MraZ from Limosilactobacillus fermentum (strain NBRC 3956 / LMG 18251) (Lactobacillus fermentum).